The chain runs to 127 residues: Aspartate 1-decarboxylase (127 aa).

The active-site Schiff-base intermediate with substrate; via pyruvic acid is the Ser25. Residue Ser25 is modified to Pyruvic acid (Ser). Position 57 (Thr57) interacts with substrate. Tyr58 serves as the catalytic Proton donor. Residue 73–75 (GAA) coordinates substrate.

It belongs to the PanD family. As to quaternary structure, heterooctamer of four alpha and four beta subunits. Pyruvate serves as cofactor. Post-translationally, is synthesized initially as an inactive proenzyme, which is activated by self-cleavage at a specific serine bond to produce a beta-subunit with a hydroxyl group at its C-terminus and an alpha-subunit with a pyruvoyl group at its N-terminus.

It is found in the cytoplasm. It carries out the reaction L-aspartate + H(+) = beta-alanine + CO2. The protein operates within cofactor biosynthesis; (R)-pantothenate biosynthesis; beta-alanine from L-aspartate: step 1/1. Catalyzes the pyruvoyl-dependent decarboxylation of aspartate to produce beta-alanine. This Listeria innocua serovar 6a (strain ATCC BAA-680 / CLIP 11262) protein is Aspartate 1-decarboxylase.